Reading from the N-terminus, the 229-residue chain is Histone H1 (229 aa).

2 disordered regions span residues 1-52 (MADT…SSHP) and 125-229 (APAL…RTRK). The segment covering 32 to 45 (KEKKKVIAAKKPKS) has biased composition (basic residues). The H15 domain maps to 50 to 119 (SHPSFFEMIS…KVKNSFKLPS (70 aa)). Low complexity predominate over residues 125–138 (APALAKKPTIPKPK). A compositionally biased stretch (basic residues) spans 139–160 (VAAKPKTAKIGAKPKAKAKVAA). Composition is skewed to low complexity over residues 161–177 (KTKA…PAAK) and 185–205 (KPKT…VASP). Residues 206–229 (GKKKAVPVKKVKTVKSPAGKRTRK) show a composition bias toward basic residues.

It belongs to the histone H1/H5 family.

The protein localises to the nucleus. It is found in the chromosome. In terms of biological role, histones H1 are necessary for the condensation of nucleosome chains into higher-order structures. This chain is Histone H1, found in Euphorbia esula (Leafy spurge).